Consider the following 74-residue polypeptide: Sec-independent protein translocase protein TatA (74 aa).

The chain crosses the membrane as a helical span at residues 1–21 (MGSIGMTELLLIFGIIVLLFG).

Belongs to the TatA/E family. Forms a complex with TatC.

The protein resides in the cell inner membrane. Functionally, part of the twin-arginine translocation (Tat) system that transports large folded proteins containing a characteristic twin-arginine motif in their signal peptide across membranes. TatA could form the protein-conducting channel of the Tat system. The polypeptide is Sec-independent protein translocase protein TatA (Sulfurihydrogenibium sp. (strain YO3AOP1)).